The sequence spans 464 residues: 3-isopropylmalate dehydratase large subunit (464 aa).

The [4Fe-4S] cluster site is built by Cys345, Cys405, and Cys408.

This sequence belongs to the aconitase/IPM isomerase family. LeuC type 1 subfamily. In terms of assembly, heterodimer of LeuC and LeuD. [4Fe-4S] cluster serves as cofactor.

It catalyses the reaction (2R,3S)-3-isopropylmalate = (2S)-2-isopropylmalate. Its pathway is amino-acid biosynthesis; L-leucine biosynthesis; L-leucine from 3-methyl-2-oxobutanoate: step 2/4. Functionally, catalyzes the isomerization between 2-isopropylmalate and 3-isopropylmalate, via the formation of 2-isopropylmaleate. The chain is 3-isopropylmalate dehydratase large subunit from Bacteroides thetaiotaomicron (strain ATCC 29148 / DSM 2079 / JCM 5827 / CCUG 10774 / NCTC 10582 / VPI-5482 / E50).